The following is a 1053-amino-acid chain: Polyphosphate kinase (1053 aa).

Disordered stretches follow at residues 23 to 155, 200 to 245, and 302 to 328; these read LKIN…QLME, VQNP…TKSK, and NNNNNDFKSSTMIGKPFSSGGDGSTSP. A compositionally biased stretch (low complexity) spans 32 to 50; sequence STTTTTSTTTTTTTTTSTS. A compositionally biased stretch (acidic residues) spans 81–102; the sequence is VDFEDDYDEESSSFDEEDEDSA. The segment covering 143–155 has biased composition (polar residues); that stretch reads TTANPVQNCQLME. Over residues 215–239 the composition is skewed to low complexity; sequence SSGSSSSSSSNNNNSNSNSNGNCNS. The active-site Phosphohistidine intermediate is the His800. Residues 1027-1053 form a disordered region; that stretch reads RSSPIDEDSQTQFMNQTNQKHPVIWSK. Positions 1036-1046 are enriched in polar residues; that stretch reads QTQFMNQTNQK.

The protein belongs to the polyphosphate kinase 1 (PPK1) family. As to quaternary structure, hexamer. May form higher oligomeric structures in the presence of ATP.

The protein localises to the vesicle. It catalyses the reaction [phosphate](n) + ATP = [phosphate](n+1) + ADP. Its function is as follows. Catalyzes the reversible transfer of the terminal phosphate of ATP to form a long-chain polyphosphate (polyP). Produces polyP in a broad range of chain lengths (50-300 Pi residues). Involved in development (growth and fruiting body formation), sporulation, phagocytosis, cell division and the late stages of cytokinesis. This is Polyphosphate kinase (ppkA) from Dictyostelium discoideum (Social amoeba).